Reading from the N-terminus, the 137-residue chain is Small ribosomal subunit protein uS12 (137 aa).

Residues 1 to 57 are disordered; the sequence is MPTINQLVRKPRQSKSKKSDSPVLNRGFNSKKKQFTNLNSPQKRGVCTRVGTMTPRK. 3-methylthioaspartic acid is present on aspartate 102. Positions 118–137 are disordered; that stretch reads SGVDGRRQGRSLYGTKKPKN.

This sequence belongs to the universal ribosomal protein uS12 family. Part of the 30S ribosomal subunit. Contacts proteins S8 and S17. May interact with IF1 in the 30S initiation complex.

Its function is as follows. With S4 and S5 plays an important role in translational accuracy. In terms of biological role, interacts with and stabilizes bases of the 16S rRNA that are involved in tRNA selection in the A site and with the mRNA backbone. Located at the interface of the 30S and 50S subunits, it traverses the body of the 30S subunit contacting proteins on the other side and probably holding the rRNA structure together. The combined cluster of proteins S8, S12 and S17 appears to hold together the shoulder and platform of the 30S subunit. In Staphylococcus haemolyticus (strain JCSC1435), this protein is Small ribosomal subunit protein uS12.